The chain runs to 348 residues: MATNQAAWLTKAGNDLEVGDAPVPTAGPGEIVVKNAAVAINPLDTHMQDVGVFVQQWPTIFGCDVAGTVHETGPDVERFKKGDRVIGHAINLVTGRPQDGAYALYTVVPANKAAILPDAISFTDGVVAPFAVEAAVCVLSLKEPGVAMPGVSTPALALPYPSLDDPVKPLGKVLVIWGGSSSVGSMTTQIATAAGIQVIAISGAHNFELSKRCGATEVFDHKDPEVVDKVVAAVQKSGQEFVGIFDAVATPDTYTSDLVILEKLGGGHLAAVHPPPAEVPSNVKAGMIFAVNDIATPVWNDFVTPALESGKIQCLPPPTIVGKGLEAINEGLKRCKAGVSATKLVVEL.

43 to 46 serves as a coordination point for NADP(+); that stretch reads LDTH. Residue 130–137 participates in substrate binding; that stretch reads FAVEAAVC. NADP(+) contacts are provided by residues 180–183, 203–206, and 272–273; these read SSSV, GAHN, and VH. 292 to 296 is a binding site for substrate; it reads NDIAT. Position 339 to 340 (339 to 340) interacts with NADP(+); sequence VS.

It belongs to the zinc-containing alcohol dehydrogenase family. As to quaternary structure, monomer.

In terms of biological role, dehydrogenase; part of the gene cluster that mediates the biosynthesis of orsellinic acid, as well as of the cathepsin K inhibitors F9775 A and F9775 B. The non-reducing polyketide synthase orsA produces orsellinic acid by condensing acetyl-CoA with 3 malonyl-CoA units. Further modifications by the decarboxylase orsB and the tyrosinase-like protein orsC lead to the production of F9775 A and F9775 B. The functions of orsD and orsE remain unclear since only orsB and orsC are required to convert orsellinic acid into F9775 A and F9775 B. The polypeptide is Dehydrogenase orsE (Emericella nidulans (strain FGSC A4 / ATCC 38163 / CBS 112.46 / NRRL 194 / M139) (Aspergillus nidulans)).